The sequence spans 719 residues: Polyphosphate kinase (719 aa).

N47 contacts ATP. Mg(2+) is bound by residues R377 and R407. Residue H437 is the Phosphohistidine intermediate of the active site. The ATP site is built by Y470, R566, and H594.

The protein belongs to the polyphosphate kinase 1 (PPK1) family. The cofactor is Mg(2+). In terms of processing, an intermediate of this reaction is the autophosphorylated ppk in which a phosphate is covalently linked to a histidine residue through a N-P bond.

It catalyses the reaction [phosphate](n) + ATP = [phosphate](n+1) + ADP. In terms of biological role, catalyzes the reversible transfer of the terminal phosphate of ATP to form a long-chain polyphosphate (polyP). The sequence is that of Polyphosphate kinase from Exiguobacterium sibiricum (strain DSM 17290 / CCUG 55495 / CIP 109462 / JCM 13490 / 255-15).